A 425-amino-acid chain; its full sequence is Dihydroorotase (425 aa).

Zn(2+)-binding residues include histidine 56 and histidine 58. Substrate contacts are provided by residues 58 to 60 and asparagine 90; that span reads HYR. Residues aspartate 148, histidine 175, and histidine 228 each coordinate Zn(2+). Substrate is bound at residue asparagine 274. Aspartate 301 serves as a coordination point for Zn(2+). Residue aspartate 301 is part of the active site. Substrate-binding positions include histidine 305 and 319 to 320; that span reads FG.

The protein belongs to the metallo-dependent hydrolases superfamily. DHOase family. Class I DHOase subfamily. Zn(2+) serves as cofactor.

The catalysed reaction is (S)-dihydroorotate + H2O = N-carbamoyl-L-aspartate + H(+). Its pathway is pyrimidine metabolism; UMP biosynthesis via de novo pathway; (S)-dihydroorotate from bicarbonate: step 3/3. Its function is as follows. Catalyzes the reversible cyclization of carbamoyl aspartate to dihydroorotate. The polypeptide is Dihydroorotase (Lactobacillus johnsonii (strain CNCM I-12250 / La1 / NCC 533)).